Reading from the N-terminus, the 457-residue chain is Serine/threonine-protein phosphatase 2A activator 2 (457 aa).

Disordered stretches follow at residues 387–407 (DAHGHIHPAGKPHAHGTGEGQ) and 426–457 (AEQEKKRQQGNFSSTMLGEKPFGTGVRRIPFD). The segment covering 391-400 (HIHPAGKPHA) has biased composition (basic residues).

Belongs to the PTPA-type PPIase family.

It is found in the cytoplasm. The enzyme catalyses [protein]-peptidylproline (omega=180) = [protein]-peptidylproline (omega=0). PPIases accelerate the folding of proteins. It catalyzes the cis-trans isomerization of proline imidic peptide bonds in oligopeptides. Acts as a regulatory subunit for PP2A-like phosphatases modulating their activity or substrate specificity, probably by inducing a conformational change in the catalytic subunit, a direct target of the PPIase. Can reactivate inactive phosphatase PP2A-phosphatase methylesterase complexes (PP2Ai) in presence of ATP and Mg(2+) by dissociating the inactive form from the complex. The sequence is that of Serine/threonine-protein phosphatase 2A activator 2 (RRD2) from Mycosarcoma maydis (Corn smut fungus).